Reading from the N-terminus, the 96-residue chain is Large ribosomal subunit protein bL27 (96 aa).

Residues 1–9 (MLRLDLQFF) constitute a propeptide that is removed on maturation.

This sequence belongs to the bacterial ribosomal protein bL27 family. Post-translationally, the N-terminus is cleaved by ribosomal processing cysteine protease Prp.

In Geobacillus sp. (strain WCH70), this protein is Large ribosomal subunit protein bL27.